Consider the following 545-residue polypeptide: Triacylglycerol lipase ptl1 (545 aa).

The PNPLA domain occupies Leu182–Trp358. The short motif at Gly213–Gly217 is the GXSXG element.

The protein localises to the lipid droplet. It catalyses the reaction a triacylglycerol + H2O = a diacylglycerol + a fatty acid + H(+). Functionally, lipid particle-localized triacylglycerol (TAG) lipase. The lipid droplet/particle is a lipid storage compartment which serves as a depot of energy and building blocks for membrane lipid biosynthesis. Involved in the mobilization of the non-polar storage lipids triacylglycerols (TAGs) from lipid particles by hydrolysis of TAGs, releasing and supplying specific fatty acids to the appropriate metabolic pathways. In Schizosaccharomyces pombe (strain 972 / ATCC 24843) (Fission yeast), this protein is Triacylglycerol lipase ptl1 (ptl1).